Reading from the N-terminus, the 265-residue chain is Indole-3-glycerol phosphate synthase (265 aa).

This sequence belongs to the TrpC family.

The catalysed reaction is 1-(2-carboxyphenylamino)-1-deoxy-D-ribulose 5-phosphate + H(+) = (1S,2R)-1-C-(indol-3-yl)glycerol 3-phosphate + CO2 + H2O. It participates in amino-acid biosynthesis; L-tryptophan biosynthesis; L-tryptophan from chorismate: step 4/5. The sequence is that of Indole-3-glycerol phosphate synthase from Syntrophobacter fumaroxidans (strain DSM 10017 / MPOB).